Here is a 170-residue protein sequence, read N- to C-terminus: Ribosome maturation factor RimP (170 aa).

Belongs to the RimP family.

The protein resides in the cytoplasm. Required for maturation of 30S ribosomal subunits. This chain is Ribosome maturation factor RimP, found in Chlorobaculum parvum (strain DSM 263 / NCIMB 8327) (Chlorobium vibrioforme subsp. thiosulfatophilum).